Consider the following 179-residue polypeptide: MQTPVSVNEKKDFIRWFLNHYQLKRRECVWILNYLMSHDSLMEKVHFVEQAEFCPRGIIMSTHCVEEVPFRFYKENVMTTDAEKSFHDIRLNKQQDLFIQLNFRSAYSSPEYAAVLESNPHIPKNLFENKKDQGLAEQILEHAISTFQREKLLKDIDDALDRHDKEAFEQLSRQLNQLT.

Belongs to the UPF0302 family.

The sequence is that of UPF0302 protein YpiB (ypiB) from Bacillus subtilis (strain 168).